The chain runs to 289 residues: Pyridoxal kinase PdxY (289 aa).

Residues Ser9 and 44 to 45 each bind substrate; that span reads TQ. ATP is bound by residues Asp112, Val144, Glu149, and Lys182. Position 221 (Asp221) interacts with substrate.

It belongs to the pyridoxine kinase family. PdxY subfamily. As to quaternary structure, homodimer. The cofactor is Mg(2+).

The enzyme catalyses pyridoxal + ATP = pyridoxal 5'-phosphate + ADP + H(+). It participates in cofactor metabolism; pyridoxal 5'-phosphate salvage; pyridoxal 5'-phosphate from pyridoxal: step 1/1. Its function is as follows. Pyridoxal kinase involved in the salvage pathway of pyridoxal 5'-phosphate (PLP). Catalyzes the phosphorylation of pyridoxal to PLP. In Vibrio parahaemolyticus serotype O3:K6 (strain RIMD 2210633), this protein is Pyridoxal kinase PdxY.